A 318-amino-acid chain; its full sequence is L-lactate dehydrogenase (318 aa).

NAD(+)-binding residues include Val15, Asp36, and Lys41. Arg89 serves as a coordination point for substrate. NAD(+) is bound by residues Ser102, 119–121 (ITN), and Thr144. 121–124 (NPVD) serves as a coordination point for substrate. Residue 149-152 (DSAR) coordinates substrate. The active-site Proton acceptor is His176. Residue Thr231 coordinates substrate.

The protein belongs to the LDH/MDH superfamily. LDH family. In terms of assembly, homotetramer.

It is found in the cytoplasm. It catalyses the reaction (S)-lactate + NAD(+) = pyruvate + NADH + H(+). It participates in fermentation; pyruvate fermentation to lactate; (S)-lactate from pyruvate: step 1/1. In terms of biological role, catalyzes the conversion of lactate to pyruvate. The polypeptide is L-lactate dehydrogenase (Fusobacterium nucleatum subsp. nucleatum (strain ATCC 25586 / DSM 15643 / BCRC 10681 / CIP 101130 / JCM 8532 / KCTC 2640 / LMG 13131 / VPI 4355)).